Here is a 300-residue protein sequence, read N- to C-terminus: UPF0282 protein TGAM_0379 (300 aa).

Belongs to the UPF0282 family.

This chain is UPF0282 protein TGAM_0379, found in Thermococcus gammatolerans (strain DSM 15229 / JCM 11827 / EJ3).